A 164-amino-acid polypeptide reads, in one-letter code: Ribosome-binding factor A (164 aa).

It belongs to the RbfA family. Monomer. Binds 30S ribosomal subunits, but not 50S ribosomal subunits or 70S ribosomes.

It localises to the cytoplasm. In terms of biological role, one of several proteins that assist in the late maturation steps of the functional core of the 30S ribosomal subunit. Associates with free 30S ribosomal subunits (but not with 30S subunits that are part of 70S ribosomes or polysomes). Required for efficient processing of 16S rRNA. May interact with the 5'-terminal helix region of 16S rRNA. This is Ribosome-binding factor A from Mycobacterium leprae (strain Br4923).